We begin with the raw amino-acid sequence, 244 residues long: Ubiquinone/menaquinone biosynthesis C-methyltransferase UbiE (244 aa).

S-adenosyl-L-methionine contacts are provided by residues threonine 70, aspartate 91, and 117 to 118 (DA).

Belongs to the class I-like SAM-binding methyltransferase superfamily. MenG/UbiE family.

The catalysed reaction is a 2-demethylmenaquinol + S-adenosyl-L-methionine = a menaquinol + S-adenosyl-L-homocysteine + H(+). It carries out the reaction a 2-methoxy-6-(all-trans-polyprenyl)benzene-1,4-diol + S-adenosyl-L-methionine = a 5-methoxy-2-methyl-3-(all-trans-polyprenyl)benzene-1,4-diol + S-adenosyl-L-homocysteine + H(+). It participates in quinol/quinone metabolism; menaquinone biosynthesis; menaquinol from 1,4-dihydroxy-2-naphthoate: step 2/2. It functions in the pathway cofactor biosynthesis; ubiquinone biosynthesis. In terms of biological role, methyltransferase required for the conversion of demethylmenaquinol (DMKH2) to menaquinol (MKH2) and the conversion of 2-polyprenyl-6-methoxy-1,4-benzoquinol (DDMQH2) to 2-polyprenyl-3-methyl-6-methoxy-1,4-benzoquinol (DMQH2). The sequence is that of Ubiquinone/menaquinone biosynthesis C-methyltransferase UbiE from Chromobacterium violaceum (strain ATCC 12472 / DSM 30191 / JCM 1249 / CCUG 213 / NBRC 12614 / NCIMB 9131 / NCTC 9757 / MK).